A 2310-amino-acid polypeptide reads, in one-letter code: Peroxide stress-activated histidine kinase mak2 (2310 aa).

One can recognise a Protein kinase domain in the interval 12–292 (DYAISQLGEF…SATDLCYTIV (281 aa)). The region spanning 1450 to 1592 (RLGPLLTTVI…LLSQQIAISV (143 aa)) is the GAF domain. The Histidine kinase domain occupies 1760–1986 (NMSHELRTPF…TFWFHVQLRN (227 aa)). Histidine 1763 carries the post-translational modification Phosphohistidine; by autocatalysis. The Response regulatory domain occupies 2180-2303 (YALIAEDNLI…QLVNAVREFV (124 aa)). Aspartate 2232 carries the 4-aspartylphosphate modification.

The protein resides in the cytoplasm. The catalysed reaction is ATP + protein L-histidine = ADP + protein N-phospho-L-histidine.. In terms of biological role, involved in the control of the SAPK-dependent transcriptional response to peroxide stress. Regulates sty1 activity. The chain is Peroxide stress-activated histidine kinase mak2 (mak2) from Schizosaccharomyces pombe (strain 972 / ATCC 24843) (Fission yeast).